We begin with the raw amino-acid sequence, 239 residues long: Seed lectin beta chain (239 aa).

Positions 88 and 106 each coordinate D-glucose. Glutamate 126 and aspartate 128 together coordinate Mn(2+). Ca(2+) is bound by residues aspartate 128, asparagine 132, and aspartate 137. The Mn(2+) site is built by aspartate 137 and histidine 142. D-glucose contacts are provided by glycine 217 and alanine 218.

It belongs to the leguminous lectin family. In terms of assembly, tetramer consisting of heterodimers of alpha and beta chains.

Functionally, galactose-binding lectin. Agglutinates human erythrocytes, and requires Ca(2+) and Mn(2+) ions for full agglutinating activity. Has antifungal activity against Fusarium sp., A.niger and A.flavus. The polypeptide is Seed lectin beta chain (Spatholobus parviflorus (Butea parviflora)).